The chain runs to 180 residues: Large ribosomal subunit protein uL6 (180 aa).

The protein belongs to the universal ribosomal protein uL6 family. As to quaternary structure, part of the 50S ribosomal subunit.

This protein binds to the 23S rRNA, and is important in its secondary structure. It is located near the subunit interface in the base of the L7/L12 stalk, and near the tRNA binding site of the peptidyltransferase center. The chain is Large ribosomal subunit protein uL6 from Dictyoglomus turgidum (strain DSM 6724 / Z-1310).